The primary structure comprises 324 residues: PDZ domain-containing protein MAGIX (324 aa).

The segment at 1 to 26 is disordered; sequence MDSRAGNTADPRGGRRGGGLQGSRSP. The PDZ domain maps to 128-212; sequence SVELTRGPAG…HLCLVLQRPQ (85 aa). Positions 216-241 are enriched in basic and acidic residues; sequence GSRIKEVGGHRKTDRSLDPRGSRVES. The tract at residues 216-263 is disordered; the sequence is GSRIKEVGGHRKTDRSLDPRGSRVESRSTISPVHHRPKTRTSPRPSPE. Residue Ser-261 is modified to Phosphoserine.

The chain is PDZ domain-containing protein MAGIX (Magix) from Mus musculus (Mouse).